Here is a 185-residue protein sequence, read N- to C-terminus: Coordinator of PRMT5 and differentiation stimulator (185 aa).

Met-1 carries the N-acetylmethionine modification. A disordered region spans residues 1 to 109 (MDPPTAGAQS…MSGCLPKEQA (109 aa)). 2 stretches are compositionally biased toward basic and acidic residues: residues 42 to 52 (SSQEKATENAT) and 66 to 77 (SPAHGEGTHCEE). Ser-66 is modified (phosphoserine). A compositionally biased stretch (acidic residues) spans 78 to 89 (EGFAEDDEDSDG).

In terms of assembly, interacts with PRMT5. Interacts with histone H4; specifically interacts with the N-terminus of histone H4 but not with histone H3. Interacts with CBFB. Found in a complex with PRMT5, RUNX1 and CBFB.

Its subcellular location is the nucleus. Functionally, histone-binding protein required for histone H4 methyltransferase activity of PRMT5. Specifically required for histone H4 'Arg-3' methylation mediated by PRMT5, but not histone H3 'Arg-8' methylation, suggesting that it modulates the substrate specificity of PRMT5. Specifically interacts with the N-terminus of histone H4 but not with histone H3, suggesting that it acts by promoting the association between histone H4 and PRMT5. Involved in CCNE1 promoter repression. Plays a role in muscle cell differentiation by modulating the recruitment of PRMT5 to the promoter of genes involved in the coordination between cell cycle exit and muscle differentiation. In Bos taurus (Bovine), this protein is Coordinator of PRMT5 and differentiation stimulator (COPRS).